The following is a 472-amino-acid chain: Probable sterol O-acyltransferase 2 (472 aa).

A Phosphoserine modification is found at S12. A run of 3 helical transmembrane segments spans residues 61 to 81 (FTGF…MSFL), 111 to 131 (LAMS…ALGY), and 135 to 155 (YGLG…HCVL). The N-linked (GlcNAc...) asparagine glycan is linked to N161. A helical membrane pass occupies residues 170–190 (FILHSMVILMKLHSYNVVNGW). An N-linked (GlcNAc...) asparagine glycan is attached at N233. Transmembrane regions (helical) follow at residues 262–282 (IHYL…LVII) and 317–337 (TVAF…WVIF). N342 carries an N-linked (GlcNAc...) asparagine glycan. An FYXDWWN motif motif is present at residues 355-361 (FYDDWWN). Residue H409 is part of the active site. A helical membrane pass occupies residues 452–472 (IAFWFSIIIGIALIAALYILF).

This sequence belongs to the membrane-bound acyltransferase family. Sterol o-acyltransferase subfamily.

Its subcellular location is the endoplasmic reticulum membrane. Its function is as follows. Sterol O-acyltransferase that catalyzes the formation of stery esters. In Schizosaccharomyces pombe (strain 972 / ATCC 24843) (Fission yeast), this protein is Probable sterol O-acyltransferase 2 (are2).